The primary structure comprises 235 residues: Protein GrpE (235 aa).

Residues 1–18 (MTDGNQKPDGNSGEQVTV) are compositionally biased toward polar residues. Disordered regions lie at residues 1–50 (MTDG…DAAH) and 198–235 (ESVD…PSGS). Positions 19-35 (TDKRRIDPETGEVRHVP) are enriched in basic and acidic residues.

It belongs to the GrpE family. Homodimer.

It is found in the cytoplasm. In terms of biological role, participates actively in the response to hyperosmotic and heat shock by preventing the aggregation of stress-denatured proteins, in association with DnaK and GrpE. It is the nucleotide exchange factor for DnaK and may function as a thermosensor. Unfolded proteins bind initially to DnaJ; upon interaction with the DnaJ-bound protein, DnaK hydrolyzes its bound ATP, resulting in the formation of a stable complex. GrpE releases ADP from DnaK; ATP binding to DnaK triggers the release of the substrate protein, thus completing the reaction cycle. Several rounds of ATP-dependent interactions between DnaJ, DnaK and GrpE are required for fully efficient folding. The polypeptide is Protein GrpE (Mycobacterium bovis (strain BCG / Pasteur 1173P2)).